Here is a 383-residue protein sequence, read N- to C-terminus: Guanine nucleotide-binding protein G(s) subunit alpha (383 aa).

The interval 1-31 (MGCFGSAGSKQSDSNSSEDTKSQKRRSDAIT) is disordered. Residue Gly-2 is the site of N-palmitoyl glycine attachment. The S-palmitoyl cysteine moiety is linked to residue Cys-3. Over residues 8 to 17 (GSKQSDSNSS) the composition is skewed to polar residues. Over residues 18–31 (EDTKSQKRRSDAIT) the composition is skewed to basic and acidic residues. One can recognise a G-alpha domain in the interval 43-383 (ATHRLLLLGA…RMHLRQYELL (341 aa)). The interval 46 to 59 (RLLLLGAGESGKST) is G1 motif. GTP is bound by residues 51 to 58 (GAGESGKS), 187 to 193 (LRCRVLT), 212 to 216 (DVGGQ), 281 to 284 (NKQD), and Ala-355. Positions 58 and 193 each coordinate Mg(2+). A G2 motif region spans residues 185–193 (DILRCRVLT). Positions 208 to 217 (FHMFDVGGQR) are G3 motif. Positions 277–284 (ILFLNKQD) are G4 motif. The interval 353–358 (TCAVDT) is G5 motif.

This sequence belongs to the G-alpha family. G(s) subfamily. In terms of assembly, g proteins are composed of 3 units; alpha, beta and gamma. The alpha chain contains the guanine nucleotide binding site.

Functionally, guanine nucleotide-binding proteins (G proteins) are involved as modulators or transducers in various transmembrane signaling systems. The G(s) protein is involved in hormonal regulation of adenylate cyclase: it activates the cyclase. Participates in olfactory signal transduction. The chain is Guanine nucleotide-binding protein G(s) subunit alpha from Anopheles gambiae (African malaria mosquito).